A 248-amino-acid polypeptide reads, in one-letter code: Phosphomannomutase (248 aa).

The active-site Nucleophile is the D12. D12 and D14 together coordinate Mg(2+). D14 acts as the Proton donor/acceptor in catalysis. R21, R123, R134, R141, S179, and D181 together coordinate alpha-D-mannose 1-phosphate. Residues D207, F219, and T224 each contribute to the Mg(2+) site.

It belongs to the eukaryotic PMM family. In terms of assembly, homodimer. Requires Mg(2+) as cofactor.

It localises to the cytoplasm. It carries out the reaction alpha-D-mannose 1-phosphate = D-mannose 6-phosphate. Its pathway is nucleotide-sugar biosynthesis; GDP-alpha-D-mannose biosynthesis; alpha-D-mannose 1-phosphate from D-fructose 6-phosphate: step 2/2. In terms of biological role, catalyzes the interconversion of mannose-6-phosphate to mannose-1-phosphate, the precursor for the synthesis of GDP-mannose. GDP-mannose is an essential sugar nucleotide for the synthesis of D-mannose-containing cell wall polysaccharides (galactomannans and glucomannans), glycolipids, glycoproteins and the antioxidant L-ascorbate. The polypeptide is Phosphomannomutase (Spinacia oleracea (Spinach)).